A 1589-amino-acid chain; its full sequence is Paternally-expressed gene 3 protein (1589 aa).

The 83-residue stretch at 46–128 (HQRFRNLIYV…TLLENYKEMY (83 aa)) folds into the SCAN box domain. Disordered stretches follow at residues 128-230 (YQPE…ESYQ), 266-306 (DGHS…RRGI), and 319-349 (KFIK…MSDD). Residues 129-142 (QPEDDNNSDVTSDD) are compositionally biased toward acidic residues. 4 stretches are compositionally biased toward basic and acidic residues: residues 143 to 152 (DMTRNRRESS), 161 to 182 (SGDR…DRWS), 206 to 225 (FEMD…RSQD), and 295 to 306 (PEAKKSTHRRGI). 3 C2H2-type zinc fingers span residues 454-476 (YVCD…QIMH), 507-529 (FECK…RKIH), and 565-587 (YECR…QKIH). The span at 588 to 607 (FGDDKDNEREHERERERGET) shows a compositional bias: basic and acidic residues. Residues 588–610 (FGDDKDNEREHERERERGETFRP) are disordered. A C2H2-type 4 zinc finger spans residues 627 to 649 (YECKVCGETFLHSSSLKEHQKIH). The segment at 838–930 (LVASKPPRSH…EFSVPSSNVR (93 aa)) is disordered. Over residues 868–881 (LNDKRQKIPARENP) the composition is skewed to basic and acidic residues. The segment at 969–991 (YECQECGECFAHSSDLTEHQKIH) adopts a C2H2-type 5 zinc-finger fold. Residues 1056 to 1104 (EKSHGEESQGENTDGEETHSEETHGQETIEDPVIQSSDMEDPQKDDPDD) are disordered. Residues 1071–1082 (EETHSEETHGQE) show a composition bias toward basic and acidic residues. C2H2-type zinc fingers lie at residues 1107–1129 (YECE…QKVH), 1163–1185 (YECP…QRIH), 1225–1247 (IRCL…MRLH), 1282–1304 (FECA…VTVH), and 1332–1354 (YECK…KELH). Residues 1396 to 1416 (AEPEVEAAEPEVEAAEPEVEA) are compositionally biased toward acidic residues. Residues 1396–1496 (AEPEVEAAEP…GIEDPEEGED (101 aa)) are disordered. Tandem repeats lie at residues 1398 to 1404 (PEVEAAE), 1405 to 1411 (PEVEAAE), 1412 to 1418 (PEVEAAE), 1419 to 1423 (PNGEA), 1426 to 1430 (PDGEA), 1433 to 1437 (PIGEA), and 1440 to 1444 (PNGEA). A 3 X 7 AA repeat of P-E-V-E-A-A-E region spans residues 1398–1418 (PEVEAAEPEVEAAEPEVEAAE). Positions 1419-1444 (PNGEAEGPDGEAAEPIGEAGQPNGEA) are 4 X 5 AA repeat of P-X-G-E-A. Composition is skewed to acidic residues over residues 1450-1467 (DADE…ERAE) and 1476-1496 (PEGD…EGED). C2H2-type zinc fingers lie at residues 1506-1528 (YDCH…LKTH) and 1565-1587 (FKCD…QNTH).

Belongs to the krueppel C2H2-type zinc-finger protein family. Homodimer. Interacts with SIAH1A and SIAH2. Interacts with TRAF2.

It localises to the nucleus. Its subcellular location is the cytoplasm. In terms of biological role, induces apoptosis in cooperation with SIAH1A. Acts as a mediator between p53/TP53 and BAX in a neuronal death pathway that is activated by DNA damage. Acts synergistically with TRAF2 and inhibits TNF induced apoptosis through activation of NF-kappa-B. The chain is Paternally-expressed gene 3 protein (PEG3) from Gorilla gorilla gorilla (Western lowland gorilla).